The chain runs to 185 residues: Adenine phosphoribosyltransferase (185 aa).

It belongs to the purine/pyrimidine phosphoribosyltransferase family. As to quaternary structure, homodimer.

The protein resides in the cytoplasm. The catalysed reaction is AMP + diphosphate = 5-phospho-alpha-D-ribose 1-diphosphate + adenine. Its pathway is purine metabolism; AMP biosynthesis via salvage pathway; AMP from adenine: step 1/1. Catalyzes a salvage reaction resulting in the formation of AMP, that is energically less costly than de novo synthesis. In Pectobacterium atrosepticum (strain SCRI 1043 / ATCC BAA-672) (Erwinia carotovora subsp. atroseptica), this protein is Adenine phosphoribosyltransferase.